The chain runs to 255 residues: Proteasome subunit alpha (255 aa).

The protein belongs to the peptidase T1A family. In terms of assembly, the 20S proteasome core is composed of 14 alpha and 14 beta subunits that assemble into four stacked heptameric rings, resulting in a barrel-shaped structure. The two inner rings, each composed of seven catalytic beta subunits, are sandwiched by two outer rings, each composed of seven alpha subunits. The catalytic chamber with the active sites is on the inside of the barrel. Has a gated structure, the ends of the cylinder being occluded by the N-termini of the alpha-subunits. Is capped at one or both ends by the proteasome regulatory ATPase, PAN.

Its subcellular location is the cytoplasm. The formation of the proteasomal ATPase PAN-20S proteasome complex, via the docking of the C-termini of PAN into the intersubunit pockets in the alpha-rings, triggers opening of the gate for substrate entry. Interconversion between the open-gate and close-gate conformations leads to a dynamic regulation of the 20S proteasome proteolysis activity. Functionally, component of the proteasome core, a large protease complex with broad specificity involved in protein degradation. The protein is Proteasome subunit alpha of Natronomonas pharaonis (strain ATCC 35678 / DSM 2160 / CIP 103997 / JCM 8858 / NBRC 14720 / NCIMB 2260 / Gabara) (Halobacterium pharaonis).